Here is a 150-residue protein sequence, read N- to C-terminus: Putative biopolymer transport protein ExbB-like 2 (150 aa).

3 helical membrane passes run 5 to 25 (VDYGIIGFLIFLSVIVIAIAI), 63 to 83 (APYIGLLGTVMGIMLTFMDLG), and 97 to 117 (LALALKATGMGLLVAIPAIVI).

The protein belongs to the ExbB/TolQ family.

It is found in the cell inner membrane. This chain is Putative biopolymer transport protein ExbB-like 2, found in Helicobacter pylori (strain ATCC 700392 / 26695) (Campylobacter pylori).